Here is a 400-residue protein sequence, read N- to C-terminus: MTRITGISLRRVLDSRGNPTVEADVLTESGGFGRGAAPSGASTGEYEAIELPANESIAKAREHAVPRLEGVYAGDQRAVDNALRAADGTDDFSAIGANSAVAISMAAAKAAADVLGAPLYQHLGGAFRGENFPIPLGNVVGGGEHAKEATHIQEFLAAPVGAPSVSEAVFANAAVHAAVADVLDERGVPAAKGDEGAWAPPISDADAFEVVDEAVDRVEEDVGFEIRFGLDMAAAELYDDDQEAYVYGEETKSTDEQIDYVADLVDEYDLAYVEDPLDENDYEAFAELTDRVGDRTMICGDDLFVTNVERLQEGIDTGAANSILIKPNQIGTLSDTFDAIELAARNGYETIISHRSGETEDTTIAHLAVATDAGFIKTGTVGGERTAKLNELVRIADDAV.

Q153 lines the (2R)-2-phosphoglycerate pocket. E195 (proton donor) is an active-site residue. 3 residues coordinate Mg(2+): D231, E274, and D301. Residues K326, R355, S356, and K377 each coordinate (2R)-2-phosphoglycerate. Catalysis depends on K326, which acts as the Proton acceptor.

Belongs to the enolase family. It depends on Mg(2+) as a cofactor.

It is found in the cytoplasm. Its subcellular location is the secreted. The protein localises to the cell surface. It carries out the reaction (2R)-2-phosphoglycerate = phosphoenolpyruvate + H2O. The protein operates within carbohydrate degradation; glycolysis; pyruvate from D-glyceraldehyde 3-phosphate: step 4/5. Its function is as follows. Catalyzes the reversible conversion of 2-phosphoglycerate (2-PG) into phosphoenolpyruvate (PEP). It is essential for the degradation of carbohydrates via glycolysis. The protein is Enolase of Halorubrum lacusprofundi (strain ATCC 49239 / DSM 5036 / JCM 8891 / ACAM 34).